Reading from the N-terminus, the 229-residue chain is Apoptosis regulator Bcl-2 (229 aa).

Residues 10–30 (DNREIVMKYIHYKLSQRGYEW) carry the BH4 motif. Positions 30-82 (WDAGDAGAAPPGAAPAPGILSSQPGRTPAPSRTSPPPPPAAAAGPAPSPVPPV) are disordered. Low complexity predominate over residues 33–61 (GDAGAAPPGAAPAPGILSSQPGRTPAPSR). A Phosphothreonine; by MAPK8 modification is found at T62. Positions 62–81 (TSPPPPPAAAAGPAPSPVPP) are enriched in pro residues. S63 bears the Phosphoserine; by MAPK8 and PKC mark. The residue at position 77 (S77) is a Phosphoserine; by MAPK8. The short motif at 83 to 97 (VHLTLRQAGDDFSRR) is the BH3 element. Residues 126-145 (ELFRDGVNWGRIVAFFEFGG) carry the BH1 motif. Positions 177–192 (TWIQDNGGWDAFVELY) match the BH2 motif. The chain crosses the membrane as a helical span at residues 202–223 (FSWLSLKALLSLALVGACITLG).

The protein belongs to the Bcl-2 family. In terms of assembly, forms homodimers, and heterodimers with BAX, BAD, BAK and Bcl-X(L). Heterodimerization with BAX requires intact BH1 and BH2 motifs, and is necessary for anti-apoptotic activity. Component of the complex, at least composed of LRPPRC, BECN1 and BCL2; the interactions prevent BECN1 from forming an autophagy-inducing complex with PIK3C3. Interacts with EI24. Also interacts with APAF1, BBC3, BCL2L1, BNIPL, MRPL41 and TP53BP2. Binding to FKBP8 seems to target BCL2 to the mitochondria and probably interferes with the binding of BCL2 to its targets. Interacts with BAG1 in an ATP-dependent manner. Interacts with RAF1 (the 'Ser-338' and 'Ser-339' phosphorylated form). Interacts (via the BH4 domain) with EGLN3; the interaction prevents the formation of the BAX-BCL2 complex and inhibits the anti-apoptotic activity of BCL2. Interacts with G0S2; this interaction also prevents the formation of the anti-apoptotic BAX-BCL2 complex. Interacts with RTL10/BOP. Interacts with the SCF(FBXO10) complex. Interacts (via the loop between motifs BH4 and BH3) with NLRP1 (via LRR repeats), but not with NLRP2, NLRP3, NLRP4, PYCARD, nor MEFV. Interacts with GIMAP3/IAN4, GIMAP4/IAN1 and GIMAP5/IAN5. Interacts with BCAP31. Interacts with IRF3; the interaction is inhibited by Sendai virus infection. Interacts with BECN1; thereby inhibiting autophagy in non-starvation conditions. Interacts with AMBRA1; thereby inhibiting autophagy. Phosphorylation/dephosphorylation on Ser-63 regulates anti-apoptotic activity. Growth factor-stimulated phosphorylation on Ser-63 by PKC is required for the anti-apoptosis activity and occurs during the G2/M phase of the cell cycle. In the absence of growth factors, BCL2 appears to be phosphorylated by other protein kinases such as ERKs and stress-activated kinases. Phosphorylated by MAPK8/JNK1 at Thr-62, Ser-63 and Ser-77, which stimulates starvation-induced autophagy. Dephosphorylated by protein phosphatase 2A (PP2A). In terms of processing, proteolytically cleaved by caspases during apoptosis. The cleaved protein, lacking the BH4 motif, has pro-apoptotic activity, causes the release of cytochrome c into the cytosol promoting further caspase activity. Post-translationally, monoubiquitinated by PRKN, leading to an increase in its stability. Ubiquitinated by SCF(FBXO10), leading to its degradation by the proteasome.

Its subcellular location is the mitochondrion outer membrane. It is found in the nucleus membrane. It localises to the endoplasmic reticulum membrane. The protein resides in the cytoplasm. In terms of biological role, suppresses apoptosis in a variety of cell systems including factor-dependent lymphohematopoietic and neural cells. Regulates cell death by controlling the mitochondrial membrane permeability. Appears to function in a feedback loop system with caspases. Inhibits caspase activity either by preventing the release of cytochrome c from the mitochondria and/or by binding to the apoptosis-activating factor (APAF-1). Also acts as an inhibitor of autophagy: interacts with BECN1 and AMBRA1 during non-starvation conditions and inhibits their autophagy function. May attenuate inflammation by impairing NLRP1-inflammasome activation, hence CASP1 activation and IL1B release. This is Apoptosis regulator Bcl-2 (BCL2) from Bos taurus (Bovine).